The following is a 151-amino-acid chain: Ribonuclease H (151 aa).

The 142-residue stretch at 5-146 (ALPHVTIFTD…ADQLAREGVA (142 aa)) folds into the RNase H type-1 domain. Residues aspartate 14, glutamate 52, aspartate 74, and aspartate 138 each coordinate Mg(2+).

This sequence belongs to the RNase H family. As to quaternary structure, monomer. It depends on Mg(2+) as a cofactor.

The protein localises to the cytoplasm. It catalyses the reaction Endonucleolytic cleavage to 5'-phosphomonoester.. Its function is as follows. Endonuclease that specifically degrades the RNA of RNA-DNA hybrids. In Nitrobacter hamburgensis (strain DSM 10229 / NCIMB 13809 / X14), this protein is Ribonuclease H.